The chain runs to 335 residues: Fructose-1,6-bisphosphatase class 1 (335 aa).

The Mg(2+) site is built by Glu-92, Asp-114, Leu-116, and Asp-117. Residues 117-120 (DGSS), Asn-209, and Lys-275 contribute to the substrate site. Glu-281 is a binding site for Mg(2+).

The protein belongs to the FBPase class 1 family. Homotetramer. It depends on Mg(2+) as a cofactor.

It localises to the cytoplasm. The catalysed reaction is beta-D-fructose 1,6-bisphosphate + H2O = beta-D-fructose 6-phosphate + phosphate. It participates in carbohydrate biosynthesis; gluconeogenesis. This Paracidovorax citrulli (strain AAC00-1) (Acidovorax citrulli) protein is Fructose-1,6-bisphosphatase class 1.